A 229-amino-acid polypeptide reads, in one-letter code: Potassium/proton antiporter CemA (229 aa).

3 consecutive transmembrane segments (helical) span residues 6–26 (AFIPFFYFTSIVFLPWLISLC), 107–127 (ILHFSTNLISFVILSGYSFWG), and 189–209 (ILSGLVSTFPVILDTIFKYWI).

It belongs to the CemA family.

The protein localises to the plastid. It localises to the chloroplast inner membrane. It catalyses the reaction K(+)(in) + H(+)(out) = K(+)(out) + H(+)(in). Contributes to K(+)/H(+) antiport activity by supporting proton efflux to control proton extrusion and homeostasis in chloroplasts in a light-dependent manner to modulate photosynthesis. Prevents excessive induction of non-photochemical quenching (NPQ) under continuous-light conditions. Indirectly promotes efficient inorganic carbon uptake into chloroplasts. The protein is Potassium/proton antiporter CemA of Barbarea verna (Land cress).